We begin with the raw amino-acid sequence, 104 residues long: MMSCFAGTRGSARVWLCAIALCLLASSCARGAAAFPNKPDSPGEDAPAEDLARYLSAVRHYINLITRQRYGKRTLTEPYVPEFIFQENRGDRSSNPRFDSVTMW.

The signal sequence occupies residues 1–34 (MMSCFAGTRGSARVWLCAIALCLLASSCARGAAA). Tyrosine 70 carries the tyrosine amide modification. Positions 74 to 104 (TLTEPYVPEFIFQENRGDRSSNPRFDSVTMW) are cleaved as a propeptide — C-terminal extension.

This sequence belongs to the NPY family. In terms of tissue distribution, lateral brainstem, dorsal spinal cord and retina.

It is found in the secreted. NPY is implicated in the control of feeding and in secretion of gonadotrophin-release hormone. The protein is Neuropeptide Y (npy) of Lampetra fluviatilis (European river lamprey).